The following is a 169-amino-acid chain: uncharacterized protein (169 aa).

This is an uncharacterized protein from Haemophilus influenzae (strain ATCC 51907 / DSM 11121 / KW20 / Rd).